Consider the following 102-residue polypeptide: Putative ubiquitin-like protein FUBI-like protein ENSP00000310146 (102 aa).

In terms of domain architecture, Ubiquitin-like spans 23–99 (LCPQVAYVRA…LEVVGRRLGV (77 aa)).

In Homo sapiens (Human), this protein is Putative ubiquitin-like protein FUBI-like protein ENSP00000310146.